The chain runs to 113 residues: Large ribosomal subunit protein uL24 (113 aa).

The interval H48–M70 is disordered.

This sequence belongs to the universal ribosomal protein uL24 family. In terms of assembly, part of the 50S ribosomal subunit.

In terms of biological role, one of two assembly initiator proteins, it binds directly to the 5'-end of the 23S rRNA, where it nucleates assembly of the 50S subunit. One of the proteins that surrounds the polypeptide exit tunnel on the outside of the subunit. This is Large ribosomal subunit protein uL24 from Tropheryma whipplei (strain TW08/27) (Whipple's bacillus).